Reading from the N-terminus, the 2298-residue chain is Protein Ycf2 (2298 aa).

Residue Gly1652–Ser1659 participates in ATP binding.

It belongs to the Ycf2 family.

Its subcellular location is the plastid. The protein resides in the chloroplast stroma. Probable ATPase of unknown function. Its presence in a non-photosynthetic plant (Epifagus virginiana) and experiments in tobacco indicate that it has an essential function which is probably not related to photosynthesis. In Aethionema cordifolium (Lebanon stonecress), this protein is Protein Ycf2.